The chain runs to 381 residues: Odorant receptor 46a, isoform A (381 aa).

At 1–37 (MSKGVEIFYKGQKAFLNILSLWPQIERRWRIIHQVNY) the chain is on the cytoplasmic side. A helical membrane pass occupies residues 38-58 (VHVIVFWVLLFDLLLVLHVMA). Asn-59 is a glycosylation site (N-linked (GlcNAc...) asparagine). Over 59 to 65 (NLSYMSE) the chain is Extracellular. The helical transmembrane segment at 66–86 (VVKAIFILATSAGHTTKLLSI) threads the bilayer. Residues 87–127 (KANNVQMEELFRRLDNEEFRPRGANEELIFAAACERSRKLR) are Cytoplasmic-facing. Residues 128-148 (DFYGALSFAALSMILIPQFAL) traverse the membrane as a helical segment. The Extracellular segment spans residues 149–170 (DWSHLPLKTYNPLGENTGSPAY). A helical transmembrane segment spans residues 171 to 191 (WLLYCYQCLALSVSCITNIGF). At 192 to 255 (DSLCSSLFIF…KTVERLLCKP (64 aa)) the chain is on the cytoplasmic side. A helical membrane pass occupies residues 256–276 (ISVQIFCSVLVLTANFYAIAV). Residues 277–287 (LSDERLELFKY) lie on the Extracellular side of the membrane. Residues 288 to 308 (VTYQACMLIQIFILCYYAGEV) form a helical membrane-spanning segment. Over 309-355 (TQRSLDLPHELYKTSWVDWDYRSRRIALLFMQRLHSTLRIRTLNPSL) the chain is Cytoplasmic. Residues 356–376 (GFDLMLFSSIVNCSYSYFALL) form a helical membrane-spanning segment. Over 377–381 (KRVNS) the chain is Extracellular.

This sequence belongs to the insect chemoreceptor superfamily. Heteromeric odorant receptor channel (TC 1.A.69) family. Or2a subfamily. Interacts with Orco. Complexes exist early in the endomembrane system in olfactory sensory neurons (OSNs), coupling these complexes to the conserved ciliary trafficking pathway. As to expression, isoform A is expressed in a subset of 17 olfactory receptor neurons in the maxillary palp.

It localises to the cell membrane. In terms of biological role, odorant receptor which mediates acceptance or avoidance behavior, depending on its substrates. The odorant receptor repertoire encodes a large collection of odor stimuli that vary widely in identity, intensity, and duration. May form a complex with Orco to form odorant-sensing units, providing sensitive and prolonged odorant signaling and calcium permeability. The chain is Odorant receptor 46a, isoform A (Or46a) from Drosophila melanogaster (Fruit fly).